The primary structure comprises 160 residues: Ribosomal RNA large subunit methyltransferase H (160 aa).

Glycine 108 contacts S-adenosyl-L-methionine.

The protein belongs to the RNA methyltransferase RlmH family. Homodimer.

Its subcellular location is the cytoplasm. It carries out the reaction pseudouridine(1915) in 23S rRNA + S-adenosyl-L-methionine = N(3)-methylpseudouridine(1915) in 23S rRNA + S-adenosyl-L-homocysteine + H(+). In terms of biological role, specifically methylates the pseudouridine at position 1915 (m3Psi1915) in 23S rRNA. The chain is Ribosomal RNA large subunit methyltransferase H from Rhodopseudomonas palustris (strain BisA53).